The chain runs to 243 residues: Terpene cyclase janB (243 aa).

Transmembrane regions (helical) follow at residues 19-39 (LADLFVLGMGLGWVINYVGMV), 48-68 (YGMAIMPLCCNIAWEIVYCVF), 77-97 (LGVFAMGLLINFGVMYAAIIF), 112-132 (LPWIFCIGVLGFLTGHLALAA), 134-154 (IGPSLAYSWGAVVCQLLLSVG), 172-194 (LWLSRFLGSCCTVGFASLRWMYW), and 205-225 (LVLWSLAVFLMVDGSYGVCFW).

It belongs to the paxB family.

Its subcellular location is the membrane. The protein operates within secondary metabolite biosynthesis. Functionally, terpene cyclase; part of the gene cluster that mediates the biosynthesis of the indole diterpenes janthitremanes such as shearinine K or shearinine A. The geranylgeranyl diphosphate (GGPP) synthase janG catalyzes the first step in janthitremane biosynthesis via conversion of farnesyl pyrophosphate and isopentyl pyrophosphate into geranylgeranyl pyrophosphate (GGPP). Condensation of indole-3-glycerol phosphate with GGPP by the prenyl transferase janC then forms 3-geranylgeranylindole (3-GGI). Epoxidation by the FAD-dependent monooxygenase janM leads to a epoxidized-GGI that is substrate of the terpene cyclase janB for cyclization to yield paspaline. Paspaline is subsequently converted to 13-desoxypaspaline by the cytochrome P450 monooxygenase janP, via beta-PC-M6 in a series of alpha-face oxidations. The cytochrome P450 monooxygenase janQ is proposed to carry out sequential beta-face oxidation steps at C-7 and C-13 of 13-desoxypaspaline to form paspalicine and paspalinine respectively. The indole diterpene prenyltransferase janD may then convert paspalinine into shearinine K which is substrate of janO and/or additional enzymes for oxidation and cyclization to generate shearinine A. This is Terpene cyclase janB from Penicillium janthinellum (Penicillium vitale).